Reading from the N-terminus, the 513-residue chain is MRRIKIFDTTLRDGEQSPGASMSVEEKVEMALMLEDLGVDLIEAGFPVSSPVQFEAVKRVAEAVQRPIVVGLARCVEKDIDAAYEALKDRPKDKRMIHVFIATSPIHRKYKLRMEKEEILERVRKYVTYARQFFDLVEFSAEDASRTEVPFLIEVYRTAIESGATTINVPDTVGYALPDEFGELIRTLKEGVPGIENVDLSVHCHNDLGLAVANSIAAVQNGATQVEVTLNGIGERAGNCALEEFVMALKVRKDRLPYETGIRTELIYPASRLLTHITGLIPARNKPIVGENVFLHESGIHQDGVLKHRETYEIMKPSDIGRSSETLVLGRHSGKHALRKKLESYGIKLDDETFQKVFEKFTELADRKKEVYDDDLFSIVSEVLKEPLNGYRLVHFHVHTGNTLLPTAAVVLQVGNEKKEAAETGNGPVDAIFKAIDKALGLQPKLEEYIIQAVGTGKNAQGEVKLTLKIDGELYSGRGVSTDIVEASAIAYINAINKYLIAKGLLRKNGGVE.

One can recognise a Pyruvate carboxyltransferase domain in the interval I4–Y268. Mn(2+) contacts are provided by D13, H203, H205, and N239. Residues R392–E513 form a regulatory domain region.

It belongs to the alpha-IPM synthase/homocitrate synthase family. LeuA type 1 subfamily. Homodimer. It depends on Mn(2+) as a cofactor.

The protein localises to the cytoplasm. The enzyme catalyses 3-methyl-2-oxobutanoate + acetyl-CoA + H2O = (2S)-2-isopropylmalate + CoA + H(+). Its pathway is amino-acid biosynthesis; L-leucine biosynthesis; L-leucine from 3-methyl-2-oxobutanoate: step 1/4. Its function is as follows. Catalyzes the condensation of the acetyl group of acetyl-CoA with 3-methyl-2-oxobutanoate (2-ketoisovalerate) to form 3-carboxy-3-hydroxy-4-methylpentanoate (2-isopropylmalate). The chain is 2-isopropylmalate synthase from Thermotoga neapolitana (strain ATCC 49049 / DSM 4359 / NBRC 107923 / NS-E).